A 372-amino-acid polypeptide reads, in one-letter code: Cytochrome b (372 aa).

4 helical membrane-spanning segments follow: residues 25–45 (FGSM…FLAI), 69–90 (WIMQ…YTHI), 105–125 (WLSG…GYVL), and 170–190 (FFAL…VHII). Residues histidine 75 and histidine 89 each coordinate heme b. Heme b contacts are provided by histidine 174 and histidine 188. Residue histidine 193 coordinates a ubiquinone. 4 consecutive transmembrane segments (helical) span residues 218 to 238 (YKDM…LSFS), 280 to 300 (LGGT…PFTH), 312 to 332 (LSQI…WTAS), and 339 to 358 (FITI…ILTP).

The protein belongs to the cytochrome b family. In terms of assembly, the cytochrome bc1 complex contains 3 respiratory subunits (MT-CYB, CYC1 and UQCRFS1), 2 core proteins (UQCRC1 and UQCRC2) and probably 6 low-molecular weight proteins. Heme b is required as a cofactor.

Its subcellular location is the mitochondrion inner membrane. In terms of biological role, component of the ubiquinol-cytochrome c reductase complex (complex III or cytochrome b-c1 complex) that is part of the mitochondrial respiratory chain. The b-c1 complex mediates electron transfer from ubiquinol to cytochrome c. Contributes to the generation of a proton gradient across the mitochondrial membrane that is then used for ATP synthesis. This chain is Cytochrome b (MT-CYB), found in Naja kaouthia (Monocled cobra).